Consider the following 854-residue polypeptide: Iron and copper transporter IacT (854 aa).

A TonB box motif is present at residues 187 to 194; the sequence is IELIVTAQ. The TBDR plug domain maps to 199-315; the sequence is DAQDVPLSLT…PAGVVNVISR (117 aa). The region spanning 320–854 is the TBDR beta-barrel domain; sequence QPEMRISALY…TYGVRVSASF (535 aa). Positions 839–854 match the TonB C-terminal box motif; sequence GFGDPVTYGVRVSASF.

The protein belongs to the TonB-dependent receptor family.

Its subcellular location is the cell outer membrane. Its function is as follows. Involved in the TonB-dependent uptake of copper and iron under conditions in which the concentration of copper exceeds that of the iron. In Nostoc sp. (strain PCC 7120 / SAG 25.82 / UTEX 2576), this protein is Iron and copper transporter IacT.